The primary structure comprises 419 residues: Dimethylallyltryptophan synthase 1 (419 aa).

Residues F81, M82, and E90 each contribute to the L-tryptophan site. F81 lines the L-tyrosine pocket. (2E)-geranyl diphosphate is bound by residues R105, K187, Y189, R251, K253, and Y255. Dimethylallyl diphosphate is bound by residues R105, K187, Y189, R251, K253, and Y255. R257 serves as a coordination point for L-tryptophan. An L-tyrosine-binding site is contributed by R257. Positions 332 and 334 each coordinate (2E)-geranyl diphosphate. Dimethylallyl diphosphate-binding residues include K332 and Y334. Y389 is an L-tryptophan binding site. Y389 is an L-tyrosine binding site. Residue Y404 coordinates (2E)-geranyl diphosphate.

The protein belongs to the tryptophan dimethylallyltransferase family.

The catalysed reaction is L-tyrosine + dimethylallyl diphosphate = 4-O-dimethylallyl-L-tyrosine + diphosphate. In terms of biological role, dimethylallyltryptophan synthase; part of the DMATS1 gene cluster that mediates the biosynthesis of a reversely N-prenylated monomeric L-tryptophan (r-N-DMAT). DMATS1 catalyzes the reverse N-prenylation of L-Trp with DMAPP to yield N-dimethylallyl-L-tryptophan. DMATS1 exhibits unusually broad substrate specificity and can utilize geranyl diphosphate (GPP) or L-Tyr as an alternative prenyl donor or acceptor, respectively. Is able to catalyze both forward and reverse prenylation, i.e., at C1 or C3 of DMAPP; and it can catalyze C-N and C-O bond-forming reactions. The main product of the cluster is the reverse-N-dimethylallyl-L-tryptophan (r-N-DMAT) produced by the dimethylallyltryptophan synthase DMATS1 and it remains unclear whether this metabolite undergoes further modifications when silent gene clusters are activated. The acetylated form of r-N-DMAT, ac-r-N-DMAT, is also produced. The roles of the cytochrome P450 monooxygenase FFUJ_09176 and the methyltransferase FFUJ_09178 have still to be elucidated. The polypeptide is Dimethylallyltryptophan synthase 1 (Gibberella fujikuroi (strain CBS 195.34 / IMI 58289 / NRRL A-6831) (Bakanae and foot rot disease fungus)).